Here is a 59-residue protein sequence, read N- to C-terminus: Conotoxin reg3.15 (59 aa).

A signal peptide spans 1–15 (RVLLTICLLLFPLTA). Residues 16–44 (IPLGGDQPAERMRNVRSAVQDPRFDSVGW) constitute a propeptide that is removed on maturation. 3 disulfide bridges follow: Cys45–Cys59, Cys46–Cys55, and Cys51–Cys58.

It belongs to the conotoxin M superfamily. As to expression, expressed by the venom duct.

The protein localises to the secreted. The sequence is that of Conotoxin reg3.15 from Conus regius (Crown cone).